A 238-amino-acid polypeptide reads, in one-letter code: Peptidyl-tRNA hydrolase (238 aa).

A tRNA-binding site is contributed by Y14. H19 (proton acceptor) is an active-site residue. Positions 64, 66, and 112 each coordinate tRNA. The segment at 202–225 is disordered; sequence PAAQSHIHQARNSAQPKKLPETGP. Over residues 207 to 216 the composition is skewed to polar residues; the sequence is HIHQARNSAQ.

Belongs to the PTH family. Monomer.

The protein localises to the cytoplasm. The enzyme catalyses an N-acyl-L-alpha-aminoacyl-tRNA + H2O = an N-acyl-L-amino acid + a tRNA + H(+). Hydrolyzes ribosome-free peptidyl-tRNAs (with 1 or more amino acids incorporated), which drop off the ribosome during protein synthesis, or as a result of ribosome stalling. Its function is as follows. Catalyzes the release of premature peptidyl moieties from peptidyl-tRNA molecules trapped in stalled 50S ribosomal subunits, and thus maintains levels of free tRNAs and 50S ribosomes. This is Peptidyl-tRNA hydrolase from Agrobacterium fabrum (strain C58 / ATCC 33970) (Agrobacterium tumefaciens (strain C58)).